The primary structure comprises 106 residues: UPF0060 membrane protein Csal_2746 (106 aa).

The next 4 helical transmembrane spans lie at 6 to 26 (LLFIATAMAEIIGCYLPWLWL), 31 to 51 (SPWLLVPAAASLTLFVWLLSL), 59 to 79 (VYAAYGGVYVVCALVWLWGVD), and 85 to 105 (PTDWIGAALALTGMGVIASGW).

The protein belongs to the UPF0060 family.

The protein localises to the cell inner membrane. The protein is UPF0060 membrane protein Csal_2746 of Chromohalobacter salexigens (strain ATCC BAA-138 / DSM 3043 / CIP 106854 / NCIMB 13768 / 1H11).